We begin with the raw amino-acid sequence, 332 residues long: uncharacterized protein (332 aa).

The signal sequence occupies residues 1–23; it reads MKRIPSLIIGLLLILATWHSVLA. A helical transmembrane segment spans residues 231–251; the sequence is SFFLGMIVTLIILAPVILYLW.

Its subcellular location is the membrane. This is an uncharacterized protein from Pyrococcus horikoshii (strain ATCC 700860 / DSM 12428 / JCM 9974 / NBRC 100139 / OT-3).